A 251-amino-acid chain; its full sequence is 14-3-3-like protein (251 aa).

Belongs to the 14-3-3 family.

The protein is 14-3-3-like protein of Fucus vesiculosus (Bladder wrack).